A 116-amino-acid chain; its full sequence is MRHRHGYRKLGRTSAHRKALLKNLAIALIEYGKIEIGVFKAKELQSYIEKLITAARSGDLNAHRYVFAYLQNKSATKKLITEIAPKYASRNGGYTRIQRTRLRRGDASQMAIIELV.

The protein belongs to the bacterial ribosomal protein bL17 family. Part of the 50S ribosomal subunit. Contacts protein L32.

This chain is Large ribosomal subunit protein bL17, found in Helicobacter hepaticus (strain ATCC 51449 / 3B1).